Here is a 122-residue protein sequence, read N- to C-terminus: MSRLCLSAALLLLLGALVASTPGDEESSLVRAGPPGFCREPPYTGPCSAHFVRYFYNATTGLCQSFVYGGCRGKQNNFMDEKECLHTCDTCAKAQGKRGNCASEMLKSTRPQGWAVAAFQMG.

The signal sequence occupies residues 1–20 (MSRLCLSAALLLLLGALVAS). Residues 21 to 29 (TPGDEESSL) constitute a propeptide that is removed on maturation. The BPTI/Kunitz inhibitor domain occupies 38–88 (CREPPYTGPCSAHFVRYFYNATTGLCQSFVYGGCRGKQNNFMDEKECLHTC). 3 disulfide bridges follow: C38/C88, C47/C71, and C63/C84.

As to expression, expressed only in the uterus and the endometrium.

Inhibitor of plasmin and trypsin. Also has a weak affinity for chymotrypsin. Could serve to neutralize the activities of one or more serine proteinases generated by the proliferating trophoblast during the formation of the noninvasive placenta. In Sus scrofa (Pig), this protein is Uterine plasmin/trypsin inhibitor.